The sequence spans 181 residues: Crossover junction endodeoxyribonuclease RuvC (181 aa).

Active-site residues include Asp7, Glu67, and Asp139. Residues Asp7, Glu67, and Asp139 each contribute to the Mg(2+) site.

This sequence belongs to the RuvC family. In terms of assembly, homodimer which binds Holliday junction (HJ) DNA. The HJ becomes 2-fold symmetrical on binding to RuvC with unstacked arms; it has a different conformation from HJ DNA in complex with RuvA. In the full resolvosome a probable DNA-RuvA(4)-RuvB(12)-RuvC(2) complex forms which resolves the HJ. Mg(2+) is required as a cofactor.

Its subcellular location is the cytoplasm. The enzyme catalyses Endonucleolytic cleavage at a junction such as a reciprocal single-stranded crossover between two homologous DNA duplexes (Holliday junction).. The RuvA-RuvB-RuvC complex processes Holliday junction (HJ) DNA during genetic recombination and DNA repair. Endonuclease that resolves HJ intermediates. Cleaves cruciform DNA by making single-stranded nicks across the HJ at symmetrical positions within the homologous arms, yielding a 5'-phosphate and a 3'-hydroxyl group; requires a central core of homology in the junction. The consensus cleavage sequence is 5'-(A/T)TT(C/G)-3'. Cleavage occurs on the 3'-side of the TT dinucleotide at the point of strand exchange. HJ branch migration catalyzed by RuvA-RuvB allows RuvC to scan DNA until it finds its consensus sequence, where it cleaves and resolves the cruciform DNA. This is Crossover junction endodeoxyribonuclease RuvC from Cupriavidus necator (strain ATCC 17699 / DSM 428 / KCTC 22496 / NCIMB 10442 / H16 / Stanier 337) (Ralstonia eutropha).